The chain runs to 427 residues: Enolase 2 (427 aa).

Q165 is a binding site for (2R)-2-phosphoglycerate. E207 functions as the Proton donor in the catalytic mechanism. Residues D244, E287, and D314 each coordinate Mg(2+). (2R)-2-phosphoglycerate is bound by residues K339, R368, S369, and K390. K339 acts as the Proton acceptor in catalysis.

It belongs to the enolase family. Component of the RNA degradosome, a multiprotein complex involved in RNA processing and mRNA degradation. It depends on Mg(2+) as a cofactor.

The protein localises to the cytoplasm. The protein resides in the secreted. It localises to the cell surface. It carries out the reaction (2R)-2-phosphoglycerate = phosphoenolpyruvate + H2O. It functions in the pathway carbohydrate degradation; glycolysis; pyruvate from D-glyceraldehyde 3-phosphate: step 4/5. Catalyzes the reversible conversion of 2-phosphoglycerate (2-PG) into phosphoenolpyruvate (PEP). It is essential for the degradation of carbohydrates via glycolysis. The chain is Enolase 2 from Pseudomonas syringae pv. syringae (strain B728a).